We begin with the raw amino-acid sequence, 200 residues long: dTTP/UTP pyrophosphatase (200 aa).

D72 (proton acceptor) is an active-site residue.

Belongs to the Maf family. YhdE subfamily. Requires a divalent metal cation as cofactor.

The protein localises to the cytoplasm. The catalysed reaction is dTTP + H2O = dTMP + diphosphate + H(+). It catalyses the reaction UTP + H2O = UMP + diphosphate + H(+). Its function is as follows. Nucleoside triphosphate pyrophosphatase that hydrolyzes dTTP and UTP. May have a dual role in cell division arrest and in preventing the incorporation of modified nucleotides into cellular nucleic acids. This is dTTP/UTP pyrophosphatase from Pseudomonas savastanoi pv. phaseolicola (strain 1448A / Race 6) (Pseudomonas syringae pv. phaseolicola (strain 1448A / Race 6)).